The chain runs to 426 residues: MLNIKWIRENQELFDDKLRQRFIEPMAKRIEELDGKKRKITNLIQEFQHARKVKSKILGNINPKSGEEFEGLQRDVKDINEKLEELEQDLNNNNELNELLNTLPNIPDEEVPYGIDESMNKLIRTHGEVDLNAQNKKQHFELGVKLDLMDFEQTAKISGARFVTLKGDLAKLERALANFMLDVHTGEFGFLEVSPPVLVRDNAMYNSGQLPKFADESFATTNGYRLIPTAEVSLVNMVADTIIPREKLPMRLVAYTPCFRSEAGSSGRDTRGMIRLHQFSKVELVSITTPEESKNEHEYMTNASETILQKLGLPYRTMLLCTGDMGFASQKTYDIEVWLPGQKQYREIASCSNCGDFQARRMKARYKEFGSHDTTLVHTLNASGLPIGRTMVAILENYQNEDGSITVPDVLVNYMGGLQKITAYKE.

229–231 contributes to the L-serine binding site; sequence TAE. Residue 260-262 coordinates ATP; it reads RSE. Position 283 (Glu-283) interacts with L-serine. ATP is bound at residue 347–350; it reads EIAS. Residue Ser-383 participates in L-serine binding.

This sequence belongs to the class-II aminoacyl-tRNA synthetase family. Type-1 seryl-tRNA synthetase subfamily. In terms of assembly, homodimer. The tRNA molecule binds across the dimer.

It is found in the cytoplasm. It catalyses the reaction tRNA(Ser) + L-serine + ATP = L-seryl-tRNA(Ser) + AMP + diphosphate + H(+). The catalysed reaction is tRNA(Sec) + L-serine + ATP = L-seryl-tRNA(Sec) + AMP + diphosphate + H(+). It functions in the pathway aminoacyl-tRNA biosynthesis; selenocysteinyl-tRNA(Sec) biosynthesis; L-seryl-tRNA(Sec) from L-serine and tRNA(Sec): step 1/1. In terms of biological role, catalyzes the attachment of serine to tRNA(Ser). Is also able to aminoacylate tRNA(Sec) with serine, to form the misacylated tRNA L-seryl-tRNA(Sec), which will be further converted into selenocysteinyl-tRNA(Sec). The polypeptide is Serine--tRNA ligase (Rickettsia bellii (strain OSU 85-389)).